We begin with the raw amino-acid sequence, 317 residues long: Glycine--tRNA ligase alpha subunit (317 aa).

The protein belongs to the class-II aminoacyl-tRNA synthetase family. Tetramer of two alpha and two beta subunits.

Its subcellular location is the cytoplasm. It catalyses the reaction tRNA(Gly) + glycine + ATP = glycyl-tRNA(Gly) + AMP + diphosphate. This is Glycine--tRNA ligase alpha subunit from Acidovorax ebreus (strain TPSY) (Diaphorobacter sp. (strain TPSY)).